We begin with the raw amino-acid sequence, 197 residues long: Ribonuclease HII (197 aa).

The RNase H type-2 domain maps to 11–197 (GRIAGVDEVG…FGPVKRVLGL (187 aa)). Residues Asp-17, Glu-18, and Asp-109 each coordinate a divalent metal cation.

It belongs to the RNase HII family. It depends on Mn(2+) as a cofactor. Mg(2+) serves as cofactor.

It localises to the cytoplasm. The catalysed reaction is Endonucleolytic cleavage to 5'-phosphomonoester.. Functionally, endonuclease that specifically degrades the RNA of RNA-DNA hybrids. The protein is Ribonuclease HII of Edwardsiella ictaluri (strain 93-146).